The following is an 83-amino-acid chain: MENDAGENVDLYVPRKCSASNRIIHAKDHASVQLSIVDVDPETGRQTDGSKTYAICGEIRRMGESDDCIVRLAKKDGIITKNF.

This sequence belongs to the eukaryotic ribosomal protein eS21 family. Component of the 40S small ribosomal subunit. Interacts with sta.

Its subcellular location is the cytoplasm. It localises to the cytosol. The protein resides in the rough endoplasmic reticulum. May be an associated component of the ribosome rather than a core structural subunit. May act as a translation initiation factor. Has a role in regulation of cell proliferation in the hematopoietic organs and the imaginal disks of larva. The chain is Small ribosomal subunit protein eS21 (RpS21) from Drosophila erecta (Fruit fly).